Consider the following 503-residue polypeptide: Efflux pump vrtL (503 aa).

Positions 1-59 (MSKLSDNHSSASEGEKEAGDLESGPTAISSEPSFDDADRDPNLITWDGPKDPENPKNWP) are disordered. A glycan (N-linked (GlcNAc...) asparagine) is linked at asparagine 7. Transmembrane regions (helical) follow at residues 68-88 (WTVS…APAM), 101-121 (IEIY…PIFF), 133-153 (LLQI…FATT), 162-182 (FLAG…ISDM), 194-214 (VYTL…GFIA), 221-241 (WVFW…FFWL), 295-315 (IVFC…LMFA), 329-349 (PGIG…GLFF), 377-397 (SLAV…WSIG), 401-421 (WIMP…CLQG), 432-454 (TYAA…GFPL), and 471-491 (LLAF…WHFG).

This sequence belongs to the major facilitator superfamily.

The protein localises to the membrane. Efflux pump; part of the gene cluster that mediates the biosynthesis of viridicatumtoxin, a tetracycline-like fungal meroterpenoid with a unique, fused spirobicyclic ring system. This chain is Efflux pump vrtL, found in Penicillium aethiopicum.